The sequence spans 275 residues: Gap junction gamma-3 protein (275 aa).

At 1-22 (MCGSFLRRVAAEESRHPTPVGR) the chain is on the cytoplasmic side. The helical transmembrane segment at 23–43 (LLLPALLGLRLVLLAAGGTGV) threads the bilayer. The Extracellular segment spans residues 44-77 (FGGGEEQSEFVCHTQQAGCKAVCYDAFHPLSPLR). A helical transmembrane segment spans residues 78 to 98 (FWAFQVTLVAVPSALYMGFIL). Residues 99–134 (YHVIWHWEASEKVKTEEETLSQGEKGGEASRAGSSR) lie on the Cytoplasmic side of the membrane. A helical transmembrane segment spans residues 135–155 (LLWAYVAQLGVRLALEGAALG). Residues 156 to 196 (GQYHLYGFRMPSSFVCRLEPCLGSTNCYLSRPSEKSIFLKT) lie on the Extracellular side of the membrane. The helical transmembrane segment at 197-217 (MFGVTGLCLLFTLLELVLLGL) threads the bilayer. The Cytoplasmic portion of the chain corresponds to 218-275 (GRWWRIWRHKSPSSNYSPTSQSAKRCKAPTDNFPVVEIRERPGEAGERGSEVPLSARP). The segment covering 254–267 (EIRERPGEAGERGS) has biased composition (basic and acidic residues). The interval 254–275 (EIRERPGEAGERGSEVPLSARP) is disordered.

It belongs to the connexin family. Gamma-type subfamily. In terms of assembly, a connexon is composed of a hexamer of connexins.

Its subcellular location is the cell membrane. It localises to the cell junction. The protein localises to the gap junction. Its function is as follows. One gap junction consists of a cluster of closely packed pairs of transmembrane channels, the connexons, through which materials of low MW diffuse from one cell to a neighboring cell. The chain is Gap junction gamma-3 protein (GJC3) from Bos taurus (Bovine).